The primary structure comprises 341 residues: tRNA N6-adenosine threonylcarbamoyltransferase (341 aa).

Fe cation-binding residues include H111 and H115. Substrate-binding positions include 134–138 (LVSGG), D167, G180, and N276. D304 provides a ligand contact to Fe cation.

It belongs to the KAE1 / TsaD family. Fe(2+) is required as a cofactor.

It is found in the cytoplasm. It catalyses the reaction L-threonylcarbamoyladenylate + adenosine(37) in tRNA = N(6)-L-threonylcarbamoyladenosine(37) in tRNA + AMP + H(+). In terms of biological role, required for the formation of a threonylcarbamoyl group on adenosine at position 37 (t(6)A37) in tRNAs that read codons beginning with adenine. Is involved in the transfer of the threonylcarbamoyl moiety of threonylcarbamoyl-AMP (TC-AMP) to the N6 group of A37, together with TsaE and TsaB. TsaD likely plays a direct catalytic role in this reaction. This Pseudomonas putida (strain ATCC 47054 / DSM 6125 / CFBP 8728 / NCIMB 11950 / KT2440) protein is tRNA N6-adenosine threonylcarbamoyltransferase.